We begin with the raw amino-acid sequence, 691 residues long: MPRTHAIEDYRNFGIMAHIDAGKTTTTERILYYTGKSHKIGEVHEGAATMDWMAQEQERGITITSAATTCFWRDKRLNIIDTPGHVDFTIEVERSLRVLDGAVCVLDGNQGVEPQTETVWRQADKYDVPRVVFVNKMDKIGADFFKCVADIIDRVAGKPVCLQLPIGAESSFQGVIDLIKMKAIVWSGEALGANFDETEIPADLKDQAVEYRTKLVEACVELDDDAMSAYLDGNEPDEATMRTLVRKAVQLRAFHPVLCGSAFKNKGVQPLLDAVVDYLPSPADRGEIKGIDFKTEEETVRHPSDSDPFSMLAFKIMDDPHVGTITFCRVYSGKVETGANVLNSSRDKKERVGRMLLMHANNREDIKEAFAGDIVALAGLKDTRTGDTLCDPQKAVILEKMEFPEPVIEIAVEPKSKADQEKLGIALSKLAAEDPSFRVSTDQESGQTILKGMGELHLDIKVDILRRTYKVDANIGQPQVAYREKLTRRQEIDYTHKKQTGGTGQFARVKFVVEPNEPGAGFSFESKIVGGAVPKEYIPGVEKGLNSVLGAGVLAGFPVVDVKVELVDGAYHDVDSSALAFEIASRAAFREALQKGGSVLLEPVMKVEVVSPEEYTGSVIGDLNARRGQIQGQDMRGNANVINAMVPLANMFGYVNQLRSFSQGRANFTMQFDHYEEVPRGEADKVIAKYA.

The region spanning 8–283 (EDYRNFGIMA…AVVDYLPSPA (276 aa)) is the tr-type G domain. GTP contacts are provided by residues 17–24 (AHIDAGKT), 81–85 (DTPGH), and 135–138 (NKMD).

Belongs to the TRAFAC class translation factor GTPase superfamily. Classic translation factor GTPase family. EF-G/EF-2 subfamily.

The protein localises to the cytoplasm. Catalyzes the GTP-dependent ribosomal translocation step during translation elongation. During this step, the ribosome changes from the pre-translocational (PRE) to the post-translocational (POST) state as the newly formed A-site-bound peptidyl-tRNA and P-site-bound deacylated tRNA move to the P and E sites, respectively. Catalyzes the coordinated movement of the two tRNA molecules, the mRNA and conformational changes in the ribosome. This is Elongation factor G from Methylobacterium radiotolerans (strain ATCC 27329 / DSM 1819 / JCM 2831 / NBRC 15690 / NCIMB 10815 / 0-1).